The primary structure comprises 552 residues: DNA ligase (552 aa).

Glu229 provides a ligand contact to ATP. Residue Lys231 is the N6-AMP-lysine intermediate of the active site. 2 residues coordinate ATP: Arg236 and Glu283. Residues Glu283 and Glu377 each contribute to the Mg(2+) site. ATP contacts are provided by Lys382 and Lys397.

It belongs to the ATP-dependent DNA ligase family. Interacts with host TOP2A and TOP2B. It depends on Mg(2+) as a cofactor.

The protein localises to the host cytoplasm. The enzyme catalyses ATP + (deoxyribonucleotide)n-3'-hydroxyl + 5'-phospho-(deoxyribonucleotide)m = (deoxyribonucleotide)n+m + AMP + diphosphate.. Functionally, DNA ligase that seals nicks in double-stranded DNA during DNA replication, DNA recombination and DNA repair. Recruits cellular topoisomerase II to sites of viral replication and assembly. Contributes to the repair of the viral genome following UV irradiation. The sequence is that of DNA ligase (OPG180) from Vaccinia virus (strain Western Reserve) (VACV).